We begin with the raw amino-acid sequence, 273 residues long: Zinc finger protein 80 (273 aa).

7 C2H2-type zinc fingers span residues 49 to 71, 77 to 99, 103 to 127, 133 to 155, 161 to 183, 189 to 211, and 217 to 239; these read YKCKECGSVFNKNSLLVRHQQIH, YECQECGKAFPEKVDFVRHVRIH, KPCKCVECGKVFNRRSHLLCHHQIH, YECSECGRTFSYHSVFIQHRMTH, FGCKECGKSFYYNSSLTRHMKIH, YKCSECGKTFTYHSVFFRHSMTH, and YECKECGKGFYYSYSLTRHTRSH.

It belongs to the krueppel C2H2-type zinc-finger protein family.

Its subcellular location is the nucleus. May be involved in transcriptional regulation. The polypeptide is Zinc finger protein 80 (ZNF80) (Pongo pygmaeus (Bornean orangutan)).